A 203-amino-acid polypeptide reads, in one-letter code: MQLDLYVDKINNGFNSNILDILAFISIILGIYTIVSKNPVVSVLFLIGLFSTISIYLIMIGLTFIGLSYLLVYIGAVSILFLFILMLINIRISELVSTNNNYIPLAILSMITLVYILGQKIITNVVQFNILNSFTSSLFEKSFKESINYSNSLSWDTNLIDITHTSAIGNIMYSSYSFWLIIISLILLLAMVGSIVISIGRVI.

Transmembrane regions (helical) follow at residues 16–36 (SNIL…TIVS), 40–60 (VVSV…LIMI), 70–90 (LLVY…LINI), 102–122 (YIPL…QKII), and 179–199 (WLII…VISI).

The protein belongs to the complex I subunit 6 family.

The protein resides in the mitochondrion membrane. The enzyme catalyses a ubiquinone + NADH + 5 H(+)(in) = a ubiquinol + NAD(+) + 4 H(+)(out). Functionally, core subunit of the mitochondrial membrane respiratory chain NADH dehydrogenase (Complex I) that is believed to belong to the minimal assembly required for catalysis. Complex I functions in the transfer of electrons from NADH to the respiratory chain. The immediate electron acceptor for the enzyme is believed to be ubiquinone. This is NADH-ubiquinone oxidoreductase chain 6 (ND6) from Trichophyton rubrum (Athlete's foot fungus).